A 272-amino-acid polypeptide reads, in one-letter code: Neurogenin-2 (272 aa).

Residues 30–69 (LTPLSSSADEEEEEEPGASGGARRQRGAEAGQGARGGVAA) form a disordered region. The region spanning 112-164 (TRRLKANNRERNRMHNLNAALDALREVLPTFPEDAKLTKIETLRFAHNYIWAL) is the bHLH domain. Residues 197–239 (ASAALSSSGDSPSPASTWSCTNSPAPSSSVSSNSTSPYSCTLS) are compositionally biased toward low complexity. Residues 197-264 (ASAALSSSGD…PPDKHRYAPH (68 aa)) are disordered.

In terms of assembly, efficient DNA binding requires dimerization with another bHLH protein.

It is found in the nucleus. In terms of biological role, transcriptional regulator. Involved in neuronal differentiation. Activates transcription by binding to the E box (5'-CANNTG-3'). The polypeptide is Neurogenin-2 (NEUROG2) (Homo sapiens (Human)).